Here is a 447-residue protein sequence, read N- to C-terminus: Phosphoglucosamine mutase (447 aa).

Ser100 acts as the Phosphoserine intermediate in catalysis. 4 residues coordinate Mg(2+): Ser100, Asp240, Asp242, and Asp244. Ser100 is subject to Phosphoserine.

It belongs to the phosphohexose mutase family. It depends on Mg(2+) as a cofactor. Activated by phosphorylation.

It catalyses the reaction alpha-D-glucosamine 1-phosphate = D-glucosamine 6-phosphate. Functionally, catalyzes the conversion of glucosamine-6-phosphate to glucosamine-1-phosphate. This Clostridium botulinum (strain Alaska E43 / Type E3) protein is Phosphoglucosamine mutase.